An 86-amino-acid chain; its full sequence is Small ribosomal subunit protein bS16 (86 aa).

Belongs to the bacterial ribosomal protein bS16 family.

This Thermoanaerobacter pseudethanolicus (strain ATCC 33223 / 39E) (Clostridium thermohydrosulfuricum) protein is Small ribosomal subunit protein bS16.